The primary structure comprises 359 residues: Cell division protein ZipA (359 aa).

Over 1–4 (MDLN) the chain is Periplasmic. A helical membrane pass occupies residues 5–25 (TILIILGILALVALVAHGLWS). Residues 26–359 (NRREKSQYFE…AEEEYLAKIK (334 aa)) lie on the Cytoplasmic side of the membrane. The disordered stretch occupies residues 78–101 (PPVQQPLNTEPEPITQETPVRAEP).

It belongs to the ZipA family. In terms of assembly, interacts with FtsZ via their C-terminal domains.

Its subcellular location is the cell inner membrane. Essential cell division protein that stabilizes the FtsZ protofilaments by cross-linking them and that serves as a cytoplasmic membrane anchor for the Z ring. Also required for the recruitment to the septal ring of downstream cell division proteins. The polypeptide is Cell division protein ZipA (Mannheimia succiniciproducens (strain KCTC 0769BP / MBEL55E)).